The chain runs to 776 residues: 5-methyltetrahydropteroyltriglutamate--homocysteine methyltransferase (776 aa).

5-methyltetrahydropteroyltri-L-glutamate contacts are provided by residues 13–16 and Lys127; that span reads RELK. Residues 450-452 and Glu503 each bind L-homocysteine; that span reads IGS. L-methionine-binding positions include 450 to 452 and Glu503; that span reads IGS. Position 580 (Trp580) interacts with 5-methyltetrahydropteroyltri-L-glutamate. Asp618 serves as a coordination point for L-homocysteine. Asp618 contacts L-methionine. Position 624 (Glu624) interacts with 5-methyltetrahydropteroyltri-L-glutamate. Zn(2+)-binding residues include His660, Cys662, and Glu684. His713 serves as the catalytic Proton donor. Residue Cys745 coordinates Zn(2+).

Belongs to the vitamin-B12 independent methionine synthase family. It depends on Zn(2+) as a cofactor.

The catalysed reaction is 5-methyltetrahydropteroyltri-L-glutamate + L-homocysteine = tetrahydropteroyltri-L-glutamate + L-methionine. It functions in the pathway amino-acid biosynthesis; L-methionine biosynthesis via de novo pathway; L-methionine from L-homocysteine (MetE route): step 1/1. Catalyzes the transfer of a methyl group from 5-methyltetrahydrofolate to homocysteine resulting in methionine formation. This is 5-methyltetrahydropteroyltriglutamate--homocysteine methyltransferase from Mesorhizobium japonicum (strain LMG 29417 / CECT 9101 / MAFF 303099) (Mesorhizobium loti (strain MAFF 303099)).